Here is a 91-residue protein sequence, read N- to C-terminus: Insertion element IS1 2 protein InsA (91 aa).

It belongs to the IS1 elements InsA family.

Functionally, absolutely required for transposition of IS1. The chain is Insertion element IS1 2 protein InsA (insA2) from Escherichia coli (strain K12).